A 450-amino-acid chain; its full sequence is Methylenetetrahydrofolate--tRNA-(uracil-5-)-methyltransferase TrmFO (450 aa).

Residue 10–15 (GGGLAG) participates in FAD binding.

The protein belongs to the MnmG family. TrmFO subfamily. Requires FAD as cofactor.

The protein resides in the cytoplasm. The enzyme catalyses uridine(54) in tRNA + (6R)-5,10-methylene-5,6,7,8-tetrahydrofolate + NADH + H(+) = 5-methyluridine(54) in tRNA + (6S)-5,6,7,8-tetrahydrofolate + NAD(+). It catalyses the reaction uridine(54) in tRNA + (6R)-5,10-methylene-5,6,7,8-tetrahydrofolate + NADPH + H(+) = 5-methyluridine(54) in tRNA + (6S)-5,6,7,8-tetrahydrofolate + NADP(+). In terms of biological role, catalyzes the folate-dependent formation of 5-methyl-uridine at position 54 (M-5-U54) in all tRNAs. The polypeptide is Methylenetetrahydrofolate--tRNA-(uracil-5-)-methyltransferase TrmFO (Anaeromyxobacter dehalogenans (strain 2CP-C)).